Here is a 562-residue protein sequence, read N- to C-terminus: Potassium-transporting ATPase potassium-binding subunit (562 aa).

Helical transmembrane passes span 6 to 26 (FLLI…LGSF), 63 to 83 (ALAI…LLMM), 132 to 152 (GLTV…FALI), 175 to 195 (LYVL…QGVL), 253 to 273 (FVQM…FGQV), 283 to 303 (LIWA…YAEL), 327 to 347 (FGIL…CGAV), 356 to 376 (ALGG…FGGV), 379 to 399 (GLYG…LMIG), 416 to 436 (MTAL…ALAL), 483 to 503 (LLLA…VLAI), and 526 to 546 (LFIG…FIPA).

Belongs to the KdpA family. As to quaternary structure, the system is composed of three essential subunits: KdpA, KdpB and KdpC.

The protein localises to the cell inner membrane. Its function is as follows. Part of the high-affinity ATP-driven potassium transport (or Kdp) system, which catalyzes the hydrolysis of ATP coupled with the electrogenic transport of potassium into the cytoplasm. This subunit binds the periplasmic potassium ions and delivers the ions to the membrane domain of KdpB through an intramembrane tunnel. The chain is Potassium-transporting ATPase potassium-binding subunit from Yersinia enterocolitica serotype O:8 / biotype 1B (strain NCTC 13174 / 8081).